The following is a 120-amino-acid chain: NAD(P)H-quinone oxidoreductase subunit 3, chloroplastic (120 aa).

A run of 3 helical transmembrane segments spans residues F9–G29, M64–M84, and V88–L108.

This sequence belongs to the complex I subunit 3 family. As to quaternary structure, NDH is composed of at least 16 different subunits, 5 of which are encoded in the nucleus.

It localises to the plastid. The protein localises to the chloroplast thylakoid membrane. It carries out the reaction a plastoquinone + NADH + (n+1) H(+)(in) = a plastoquinol + NAD(+) + n H(+)(out). The catalysed reaction is a plastoquinone + NADPH + (n+1) H(+)(in) = a plastoquinol + NADP(+) + n H(+)(out). Its function is as follows. NDH shuttles electrons from NAD(P)H:plastoquinone, via FMN and iron-sulfur (Fe-S) centers, to quinones in the photosynthetic chain and possibly in a chloroplast respiratory chain. The immediate electron acceptor for the enzyme in this species is believed to be plastoquinone. Couples the redox reaction to proton translocation, and thus conserves the redox energy in a proton gradient. The chain is NAD(P)H-quinone oxidoreductase subunit 3, chloroplastic from Nicotiana tabacum (Common tobacco).